The chain runs to 164 residues: Protein-export protein SecB (164 aa).

Belongs to the SecB family. In terms of assembly, homotetramer, a dimer of dimers. One homotetramer interacts with 1 SecA dimer.

The protein localises to the cytoplasm. Its function is as follows. One of the proteins required for the normal export of preproteins out of the cell cytoplasm. It is a molecular chaperone that binds to a subset of precursor proteins, maintaining them in a translocation-competent state. It also specifically binds to its receptor SecA. This Shewanella denitrificans (strain OS217 / ATCC BAA-1090 / DSM 15013) protein is Protein-export protein SecB.